Reading from the N-terminus, the 117-residue chain is Cell division protein FtsL (117 aa).

Topologically, residues 1-35 are cytoplasmic; sequence MSNLAYQPEKQQRHAISPEKKVIVKKRASITLGEK. A helical transmembrane segment spans residues 36 to 56; it reads VLLVLFAAAVLSVSLLIVSKA. The Extracellular portion of the chain corresponds to 57–117; sequence YAAYQTNIEV…KDKKVKNIQE (61 aa).

This sequence belongs to the FtsL family. As to quaternary structure, monomer. Interacts with DivIB and DivIC. Interaction with DivIC stabilizes FtsL against RasP cleavage. Post-translationally, cleaved by RasP. Cleavage is important for turnover and function of FtsL.

It localises to the cell membrane. In terms of biological role, essential cell division protein that may play a structural role. Probably involved in the regulation of the timing of cell division. Also required for sporulation. This is Cell division protein FtsL from Bacillus subtilis (strain 168).